The following is a 78-amino-acid chain: DNA-directed RNA polymerase subunit omega (78 aa).

Belongs to the RNA polymerase subunit omega family. In cyanobacteria the RNAP catalytic core is composed of 2 alpha, 1 beta, 1 beta', 1 gamma and 1 omega subunit. When a sigma factor is associated with the core the holoenzyme is formed, which can initiate transcription.

The catalysed reaction is RNA(n) + a ribonucleoside 5'-triphosphate = RNA(n+1) + diphosphate. Promotes RNA polymerase assembly. Latches the N- and C-terminal regions of the beta' subunit thereby facilitating its interaction with the beta and alpha subunits. This Prochlorococcus marinus (strain MIT 9515) protein is DNA-directed RNA polymerase subunit omega.